A 311-amino-acid polypeptide reads, in one-letter code: tRNA-cytidine(32) 2-sulfurtransferase (311 aa).

A PP-loop motif motif is present at residues 47–52; it reads SGGKDS. Residues Cys122, Cys125, and Cys213 each coordinate [4Fe-4S] cluster.

The protein belongs to the TtcA family. As to quaternary structure, homodimer. Requires Mg(2+) as cofactor. [4Fe-4S] cluster serves as cofactor.

Its subcellular location is the cytoplasm. The enzyme catalyses cytidine(32) in tRNA + S-sulfanyl-L-cysteinyl-[cysteine desulfurase] + AH2 + ATP = 2-thiocytidine(32) in tRNA + L-cysteinyl-[cysteine desulfurase] + A + AMP + diphosphate + H(+). Its pathway is tRNA modification. In terms of biological role, catalyzes the ATP-dependent 2-thiolation of cytidine in position 32 of tRNA, to form 2-thiocytidine (s(2)C32). The sulfur atoms are provided by the cysteine/cysteine desulfurase (IscS) system. This chain is tRNA-cytidine(32) 2-sulfurtransferase, found in Escherichia coli O81 (strain ED1a).